We begin with the raw amino-acid sequence, 214 residues long: Adenylate kinase (214 aa).

10 to 15 (GAGKGT) is a binding site for ATP. Positions 30 to 59 (STGDMLRAAIKAGTELGLEAKRVMDEGKLV) are NMP. AMP contacts are provided by residues Thr31, Arg36, 57–59 (KLV), 85–88 (GFPR), and Gln92. The interval 122-159 (GRRVHPASGRVYHVVYNPPKVEGKDNETGDDLIVRDDD) is LID. Residues Arg123 and 132-133 (VY) each bind ATP. Residues Arg156 and Arg167 each contribute to the AMP site. Position 200 (Arg200) interacts with ATP.

The protein belongs to the adenylate kinase family. Monomer.

The protein resides in the cytoplasm. It catalyses the reaction AMP + ATP = 2 ADP. Its pathway is purine metabolism; AMP biosynthesis via salvage pathway; AMP from ADP: step 1/1. In terms of biological role, catalyzes the reversible transfer of the terminal phosphate group between ATP and AMP. Plays an important role in cellular energy homeostasis and in adenine nucleotide metabolism. This is Adenylate kinase from Alteromonas mediterranea (strain DSM 17117 / CIP 110805 / LMG 28347 / Deep ecotype).